The following is a 538-amino-acid chain: Chaperonin GroEL (538 aa).

Residues 30 to 33 (TLGP), 87 to 91 (DGTTT), glycine 415, 479 to 481 (DAA), and aspartate 495 each bind ATP.

Belongs to the chaperonin (HSP60) family. Forms a cylinder of 14 subunits composed of two heptameric rings stacked back-to-back. Interacts with the co-chaperonin GroES.

It localises to the cytoplasm. The enzyme catalyses ATP + H2O + a folded polypeptide = ADP + phosphate + an unfolded polypeptide.. In terms of biological role, together with its co-chaperonin GroES, plays an essential role in assisting protein folding. The GroEL-GroES system forms a nano-cage that allows encapsulation of the non-native substrate proteins and provides a physical environment optimized to promote and accelerate protein folding. The protein is Chaperonin GroEL of Dictyoglomus turgidum (strain DSM 6724 / Z-1310).